Here is a 369-residue protein sequence, read N- to C-terminus: tRNA/tmRNA (uracil-C(5))-methyltransferase (369 aa).

S-adenosyl-L-methionine contacts are provided by Q193, Y221, N226, E242, and D302. Catalysis depends on C327, which acts as the Nucleophile. E361 functions as the Proton acceptor in the catalytic mechanism.

The protein belongs to the class I-like SAM-binding methyltransferase superfamily. RNA M5U methyltransferase family. TrmA subfamily.

The enzyme catalyses uridine(54) in tRNA + S-adenosyl-L-methionine = 5-methyluridine(54) in tRNA + S-adenosyl-L-homocysteine + H(+). The catalysed reaction is uridine(341) in tmRNA + S-adenosyl-L-methionine = 5-methyluridine(341) in tmRNA + S-adenosyl-L-homocysteine + H(+). Functionally, dual-specificity methyltransferase that catalyzes the formation of 5-methyluridine at position 54 (m5U54) in all tRNAs, and that of position 341 (m5U341) in tmRNA (transfer-mRNA). In Sulfurimonas denitrificans (strain ATCC 33889 / DSM 1251) (Thiomicrospira denitrificans (strain ATCC 33889 / DSM 1251)), this protein is tRNA/tmRNA (uracil-C(5))-methyltransferase.